We begin with the raw amino-acid sequence, 738 residues long: Polyribonucleotide nucleotidyltransferase (738 aa).

Residues Asp-528 and Asp-534 each coordinate Mg(2+). The region spanning 594–653 (PRVVRVKIPVQKIGELIGPKGKVINSIQDETGAEISIEDDGTVYIGSSQADSSEKAVAMV) is the KH domain. One can recognise an S1 motif domain in the interval 665-737 (GSQFLGTVVK…DRGKLCLVAV (73 aa)).

Belongs to the polyribonucleotide nucleotidyltransferase family. Mg(2+) is required as a cofactor.

Its subcellular location is the cytoplasm. The enzyme catalyses RNA(n+1) + phosphate = RNA(n) + a ribonucleoside 5'-diphosphate. Functionally, involved in mRNA degradation. Catalyzes the phosphorolysis of single-stranded polyribonucleotides processively in the 3'- to 5'-direction. The chain is Polyribonucleotide nucleotidyltransferase from Tropheryma whipplei (strain Twist) (Whipple's bacillus).